The following is a 401-amino-acid chain: S-adenosylmethionine synthase (401 aa).

136-141 provides a ligand contact to ATP; it reads GQGSVD.

It belongs to the AdoMet synthase 2 family. It depends on Mg(2+) as a cofactor.

The enzyme catalyses L-methionine + ATP + H2O = S-adenosyl-L-methionine + phosphate + diphosphate. The protein operates within amino-acid biosynthesis; S-adenosyl-L-methionine biosynthesis; S-adenosyl-L-methionine from L-methionine: step 1/1. In terms of biological role, catalyzes the formation of S-adenosylmethionine from methionine and ATP. In Pyrococcus furiosus (strain ATCC 43587 / DSM 3638 / JCM 8422 / Vc1), this protein is S-adenosylmethionine synthase.